Reading from the N-terminus, the 253-residue chain is Proteasome subunit alpha (253 aa).

Over residues 232 to 242 (AAGASTAGEAG) the composition is skewed to low complexity. A disordered region spans residues 232–253 (AAGASTAGEAGSAEDEGSDDEK). Over residues 243 to 253 (SAEDEGSDDEK) the composition is skewed to acidic residues.

This sequence belongs to the peptidase T1A family. The 20S proteasome core is composed of 14 alpha and 14 beta subunits that assemble into four stacked heptameric rings, resulting in a barrel-shaped structure. The two inner rings, each composed of seven catalytic beta subunits, are sandwiched by two outer rings, each composed of seven alpha subunits. The catalytic chamber with the active sites is on the inside of the barrel. Has a gated structure, the ends of the cylinder being occluded by the N-termini of the alpha-subunits. Is capped by the proteasome-associated ATPase, ARC.

It is found in the cytoplasm. Its pathway is protein degradation; proteasomal Pup-dependent pathway. Its activity is regulated as follows. The formation of the proteasomal ATPase ARC-20S proteasome complex, likely via the docking of the C-termini of ARC into the intersubunit pockets in the alpha-rings, may trigger opening of the gate for substrate entry. Interconversion between the open-gate and close-gate conformations leads to a dynamic regulation of the 20S proteasome proteolysis activity. Its function is as follows. Component of the proteasome core, a large protease complex with broad specificity involved in protein degradation. This is Proteasome subunit alpha from Streptomyces avermitilis (strain ATCC 31267 / DSM 46492 / JCM 5070 / NBRC 14893 / NCIMB 12804 / NRRL 8165 / MA-4680).